Reading from the N-terminus, the 247-residue chain is Neurotrophic factor BDNF precursor form (247 aa).

Positions 1–18 are cleaved as a signal peptide; the sequence is MTILFLTMVISYFGCMKA. A propeptide spanning residues 19–128 is cleaved from the precursor; that stretch reads APMKEANVRG…AANMSVRVRR (110 aa). N-linked (GlcNAc...) asparagine glycosylation occurs at N121. 3 disulfides stabilise this stretch: C141-C208, C186-C237, and C196-C239.

Belongs to the NGF-beta family. As to quaternary structure, monomers and homodimers. Binds to NTRK2/TRKB. Can form heterodimers with other neurotrophin family members, such as NTF3 and NTF4 (in vitro), but the physiological relevance of this is not clear. BDNF precursor form: interacts with the heterodimer formed by NGFR and SORCS2. Mature BDNF has much lower affinity for the heterodimer formed by NGFR and SORCS2. In terms of processing, N-glycosylated and glycosulfated, contrary to mature BDNF. Post-translationally, mature BDNF is produced by proteolytic removal of the propeptide, catalyzed by a FURIN family member. In addition, the precursor form is proteolytically cleaved within the propeptide, but this is not an obligatory intermediate for the production of mature BDNF. Can be converted into mature BDNF by plasmin (PLG).

It is found in the secreted. Important signaling molecule that activates signaling cascades downstream of NTRK2. During development, promotes the survival and differentiation of selected neuronal populations of the peripheral and central nervous systems. Participates in axonal growth, pathfinding and in the modulation of dendritic growth and morphology. Major regulator of synaptic transmission and plasticity at adult synapses in many regions of the CNS. The versatility of BDNF is emphasized by its contribution to a range of adaptive neuronal responses including long-term potentiation (LTP), long-term depression (LTD), certain forms of short-term synaptic plasticity, as well as homeostatic regulation of intrinsic neuronal excitability. In terms of biological role, important signaling molecule that activates signaling cascades downstream of NTRK2. Activates signaling cascades via the heterodimeric receptor formed by NGFR and SORCS2. Signaling via NGFR and SORCS2 plays a role in synaptic plasticity and long-term depression (LTD). Binding to NGFR and SORCS2 promotes neuronal apoptosis. Promotes neuronal growth cone collapse. This chain is Neurotrophic factor BDNF precursor form (BDNF), found in Felis catus (Cat).